The chain runs to 173 residues: Protein tyrosine phosphatase type IVA 1 (173 aa).

The region spanning 8-161 (APVEVTYKNM…YRPKMRLRFK (154 aa)) is the Tyrosine-protein phosphatase domain. Cysteine 49 and cysteine 104 form a disulfide bridge. Aspartate 72 (proton donor) is an active-site residue. The tract at residues 97-132 (GCCIAVHCVAGLGRAPVLVALALIEGGMKYEDAVQF) is interaction with ATF5. Catalysis depends on cysteine 104, which acts as the Phosphocysteine intermediate. Residue 105-110 (VAGLGR) coordinates phosphate. Arginine 110 is a binding site for substrate. Cysteine 170 bears the Cysteine methyl ester mark. The S-farnesyl cysteine moiety is linked to residue cysteine 170. Residues 171 to 173 (CIQ) constitute a propeptide, removed in mature form.

The protein belongs to the protein-tyrosine phosphatase family. As to quaternary structure, homotrimer. Interacts with ATF5 and tubulin. Post-translationally, farnesylated. Farnesylation is required for membrane targeting.

The protein resides in the cell membrane. Its subcellular location is the early endosome. It localises to the endoplasmic reticulum. It is found in the cytoplasm. The protein localises to the cytoskeleton. The protein resides in the spindle. Its subcellular location is the nucleus. It carries out the reaction O-phospho-L-tyrosyl-[protein] + H2O = L-tyrosyl-[protein] + phosphate. With respect to regulation, inhibited by sodium orthovanadate and pentamidine. Protein tyrosine phosphatase which stimulates progression from G1 into S phase during mitosis. May play a role in the development and maintenance of differentiating epithelial tissues. The protein is Protein tyrosine phosphatase type IVA 1 (PTP4A1) of Pongo abelii (Sumatran orangutan).